Here is a 175-residue protein sequence, read N- to C-terminus: Ribosome maturation factor RimM (175 aa).

Residues 98-175 (EGEYYWYQLE…EMRVDWDADF (78 aa)) enclose the PRC barrel domain.

The protein belongs to the RimM family. In terms of assembly, binds ribosomal protein uS19.

The protein localises to the cytoplasm. Functionally, an accessory protein needed during the final step in the assembly of 30S ribosomal subunit, possibly for assembly of the head region. Essential for efficient processing of 16S rRNA. May be needed both before and after RbfA during the maturation of 16S rRNA. It has affinity for free ribosomal 30S subunits but not for 70S ribosomes. This chain is Ribosome maturation factor RimM, found in Pseudomonas paraeruginosa (strain DSM 24068 / PA7) (Pseudomonas aeruginosa (strain PA7)).